The following is a 258-amino-acid chain: 1-(5-phosphoribosyl)-5-[(5-phosphoribosylamino)methylideneamino] imidazole-4-carboxamide isomerase 2 (258 aa).

The Proton acceptor role is filled by aspartate 14. Catalysis depends on aspartate 140, which acts as the Proton donor.

The protein belongs to the HisA/HisF family.

It localises to the cytoplasm. The enzyme catalyses 1-(5-phospho-beta-D-ribosyl)-5-[(5-phospho-beta-D-ribosylamino)methylideneamino]imidazole-4-carboxamide = 5-[(5-phospho-1-deoxy-D-ribulos-1-ylimino)methylamino]-1-(5-phospho-beta-D-ribosyl)imidazole-4-carboxamide. It participates in amino-acid biosynthesis; L-histidine biosynthesis; L-histidine from 5-phospho-alpha-D-ribose 1-diphosphate: step 4/9. The sequence is that of 1-(5-phosphoribosyl)-5-[(5-phosphoribosylamino)methylideneamino] imidazole-4-carboxamide isomerase 2 (hisA2) from Photorhabdus laumondii subsp. laumondii (strain DSM 15139 / CIP 105565 / TT01) (Photorhabdus luminescens subsp. laumondii).